The primary structure comprises 611 residues: Rop guanine nucleotide exchange factor 5 (611 aa).

The interval 1–62 (MENLVKSCAG…PPPPPSQILG (62 aa)) is disordered. Low complexity predominate over residues 34–51 (STSGASYESSSTTTVASS). The region spanning 93 to 477 (FKAKEMNSAD…DLTKQSDDNN (385 aa)) is the PRONE domain. Disordered regions lie at residues 513-541 (TTPG…TNKI) and 588-611 (DVEE…YTVS). The span at 525–541 (KKGERRTPYSSKDTNKI) shows a compositional bias: basic and acidic residues.

Functionally, guanine-nucleotide exchange factor (GEF) that acts as an activator of Rop (Rho of plants) GTPases by promoting the exchange of GDP for GTP. The protein is Rop guanine nucleotide exchange factor 5 (ROPGEF5) of Arabidopsis thaliana (Mouse-ear cress).